The sequence spans 74 residues: High-potential iron-sulfur protein isozyme 2 (74 aa).

Residues C36, C39, C53, and C67 each coordinate [4Fe-4S] cluster.

As to quaternary structure, homodimer.

Its function is as follows. Specific class of high-redox-potential 4Fe-4S ferredoxins. Functions in anaerobic electron transport in most purple and in some other photosynthetic bacteria and in at least one genus (Paracoccus) of halophilic, denitrifying bacteria. This is High-potential iron-sulfur protein isozyme 2 from Ectothiorhodospira mobilis.